A 362-amino-acid polypeptide reads, in one-letter code: 3-isopropylmalate dehydrogenase (362 aa).

78–91 (GYKWDSLPPHQRPE) contacts NAD(+). Residues arginine 98, arginine 108, arginine 136, and aspartate 226 each coordinate substrate. The Mg(2+) site is built by aspartate 226, aspartate 250, and aspartate 254. 284–296 (GSAPDIAGQDKAN) lines the NAD(+) pocket.

It belongs to the isocitrate and isopropylmalate dehydrogenases family. LeuB type 1 subfamily. Homodimer. It depends on Mg(2+) as a cofactor. The cofactor is Mn(2+).

The protein resides in the cytoplasm. The enzyme catalyses (2R,3S)-3-isopropylmalate + NAD(+) = 4-methyl-2-oxopentanoate + CO2 + NADH. It functions in the pathway amino-acid biosynthesis; L-leucine biosynthesis; L-leucine from 3-methyl-2-oxobutanoate: step 3/4. Functionally, catalyzes the oxidation of 3-carboxy-2-hydroxy-4-methylpentanoate (3-isopropylmalate) to 3-carboxy-4-methyl-2-oxopentanoate. The product decarboxylates to 4-methyl-2 oxopentanoate. The protein is 3-isopropylmalate dehydrogenase of Nostoc sp. (strain PCC 7120 / SAG 25.82 / UTEX 2576).